A 425-amino-acid polypeptide reads, in one-letter code: Serine--tRNA ligase (425 aa).

Residue 229–231 coordinates L-serine; sequence TSE. Residues 259-261 and Val-275 contribute to the ATP site; that span reads RKE. Position 282 (Glu-282) interacts with L-serine. 349–352 provides a ligand contact to ATP; that stretch reads EITS. Thr-384 provides a ligand contact to L-serine.

It belongs to the class-II aminoacyl-tRNA synthetase family. Type-1 seryl-tRNA synthetase subfamily. In terms of assembly, homodimer. The tRNA molecule binds across the dimer.

The protein resides in the cytoplasm. The catalysed reaction is tRNA(Ser) + L-serine + ATP = L-seryl-tRNA(Ser) + AMP + diphosphate + H(+). The enzyme catalyses tRNA(Sec) + L-serine + ATP = L-seryl-tRNA(Sec) + AMP + diphosphate + H(+). It participates in aminoacyl-tRNA biosynthesis; selenocysteinyl-tRNA(Sec) biosynthesis; L-seryl-tRNA(Sec) from L-serine and tRNA(Sec): step 1/1. In terms of biological role, catalyzes the attachment of serine to tRNA(Ser). Is also able to aminoacylate tRNA(Sec) with serine, to form the misacylated tRNA L-seryl-tRNA(Sec), which will be further converted into selenocysteinyl-tRNA(Sec). The protein is Serine--tRNA ligase of Borreliella afzelii (strain PKo) (Borrelia afzelii).